We begin with the raw amino-acid sequence, 751 residues long: Fusarisetin A cluster transcription factor fsa6 (751 aa).

A disordered region spans residues 1–35; the sequence is MADQAQDVRPTEWGPGKTPQGRARLPSSRPREKPQ. Positions 38-66 form a DNA-binding region, zn(2)-C6 fungal-type; that stretch reads CNLCRRRKLRCDRQRPCSSCAQRELGLSC. Positions 107–116 are enriched in polar residues; sequence NVNAQDQVGA. The interval 107 to 153 is disordered; it reads NVNAQDQVGATPSPRGQPRGPDYPTPAAVHAPSTNEEPVSAAVSPAD.

The protein resides in the nucleus. Functionally, transcription factor that regulates the expression of the gene cluster that mediates the biosynthesis of fusarisetin A. This is Fusarisetin A cluster transcription factor fsa6 from Fusarium sp. (strain FN080326).